We begin with the raw amino-acid sequence, 394 residues long: Elongation factor Tu (394 aa).

In terms of domain architecture, tr-type G spans 10–204 (KPHINVGTIG…ALDNYIPEPK (195 aa)). The tract at residues 19–26 (GHVDHGKT) is G1. 19–26 (GHVDHGKT) provides a ligand contact to GTP. Threonine 26 serves as a coordination point for Mg(2+). The G2 stretch occupies residues 60–64 (GITIN). Residues 81 to 84 (DCPG) form a G3 region. GTP-binding positions include 81–85 (DCPGH) and 136–139 (NKCD). Positions 136-139 (NKCD) are G4. A G5 region spans residues 174 to 176 (SAL).

It belongs to the TRAFAC class translation factor GTPase superfamily. Classic translation factor GTPase family. EF-Tu/EF-1A subfamily. As to quaternary structure, monomer.

Its subcellular location is the cytoplasm. It catalyses the reaction GTP + H2O = GDP + phosphate + H(+). Functionally, GTP hydrolase that promotes the GTP-dependent binding of aminoacyl-tRNA to the A-site of ribosomes during protein biosynthesis. In Blochmanniella pennsylvanica (strain BPEN), this protein is Elongation factor Tu.